Here is a 140-residue protein sequence, read N- to C-terminus: Putative pre-16S rRNA nuclease (140 aa).

It belongs to the YqgF nuclease family.

The protein localises to the cytoplasm. Functionally, could be a nuclease involved in processing of the 5'-end of pre-16S rRNA. This Aeromonas hydrophila protein is Putative pre-16S rRNA nuclease.